Consider the following 293-residue polypeptide: Glycine--tRNA ligase alpha subunit (293 aa).

This sequence belongs to the class-II aminoacyl-tRNA synthetase family. In terms of assembly, tetramer of two alpha and two beta subunits.

It localises to the cytoplasm. It catalyses the reaction tRNA(Gly) + glycine + ATP = glycyl-tRNA(Gly) + AMP + diphosphate. This chain is Glycine--tRNA ligase alpha subunit, found in Oceanobacillus iheyensis (strain DSM 14371 / CIP 107618 / JCM 11309 / KCTC 3954 / HTE831).